Here is a 75-residue protein sequence, read N- to C-terminus: Cytochrome c oxidase subunit 6C (75 aa).

At 1–13 the chain is on the mitochondrial matrix side; the sequence is MSSGALTKPQMRG. The helical transmembrane segment at 14 to 54 threads the bilayer; that stretch reads LLAKRLRFHIVGAFAVSLGVAAFYKFAVAEPRKKAYADFYR. Topologically, residues 55–75 are mitochondrial intermembrane; it reads NYDSMKDFEEMRKAGIFQSAK.

Belongs to the cytochrome c oxidase subunit 6c family. As to quaternary structure, component of the cytochrome c oxidase (complex IV, CIV), a multisubunit enzyme composed of 14 subunits. The complex is composed of a catalytic core of 3 subunits MT-CO1, MT-CO2 and MT-CO3, encoded in the mitochondrial DNA, and 11 supernumerary subunits COX4I, COX5A, COX5B, COX6A, COX6B, COX6C, COX7A, COX7B, COX7C, COX8 and NDUFA4, which are encoded in the nuclear genome. The complex exists as a monomer or a dimer and forms supercomplexes (SCs) in the inner mitochondrial membrane with NADH-ubiquinone oxidoreductase (complex I, CI) and ubiquinol-cytochrome c oxidoreductase (cytochrome b-c1 complex, complex III, CIII), resulting in different assemblies (supercomplex SCI(1)III(2)IV(1) and megacomplex MCI(2)III(2)IV(2)).

It localises to the mitochondrion inner membrane. The protein operates within energy metabolism; oxidative phosphorylation. In terms of biological role, component of the cytochrome c oxidase, the last enzyme in the mitochondrial electron transport chain which drives oxidative phosphorylation. The respiratory chain contains 3 multisubunit complexes succinate dehydrogenase (complex II, CII), ubiquinol-cytochrome c oxidoreductase (cytochrome b-c1 complex, complex III, CIII) and cytochrome c oxidase (complex IV, CIV), that cooperate to transfer electrons derived from NADH and succinate to molecular oxygen, creating an electrochemical gradient over the inner membrane that drives transmembrane transport and the ATP synthase. Cytochrome c oxidase is the component of the respiratory chain that catalyzes the reduction of oxygen to water. Electrons originating from reduced cytochrome c in the intermembrane space (IMS) are transferred via the dinuclear copper A center (CU(A)) of subunit 2 and heme A of subunit 1 to the active site in subunit 1, a binuclear center (BNC) formed by heme A3 and copper B (CU(B)). The BNC reduces molecular oxygen to 2 water molecules using 4 electrons from cytochrome c in the IMS and 4 protons from the mitochondrial matrix. The chain is Cytochrome c oxidase subunit 6C (COX6C) from Carlito syrichta (Philippine tarsier).